A 264-amino-acid chain; its full sequence is S-adenosylmethionine decarboxylase proenzyme (264 aa).

Residue Ser111 is the Schiff-base intermediate with substrate; via pyruvic acid of the active site. Ser111 carries the pyruvic acid (Ser); by autocatalysis modification. The active-site Proton acceptor; for processing activity is the His116. Residue Cys139 is the Proton donor; for catalytic activity of the active site.

This sequence belongs to the prokaryotic AdoMetDC family. Type 2 subfamily. As to quaternary structure, heterooctamer of four alpha and four beta chains arranged as a tetramer of alpha/beta heterodimers. The cofactor is pyruvate. Is synthesized initially as an inactive proenzyme. Formation of the active enzyme involves a self-maturation process in which the active site pyruvoyl group is generated from an internal serine residue via an autocatalytic post-translational modification. Two non-identical subunits are generated from the proenzyme in this reaction, and the pyruvate is formed at the N-terminus of the alpha chain, which is derived from the carboxyl end of the proenzyme. The post-translation cleavage follows an unusual pathway, termed non-hydrolytic serinolysis, in which the side chain hydroxyl group of the serine supplies its oxygen atom to form the C-terminus of the beta chain, while the remainder of the serine residue undergoes an oxidative deamination to produce ammonia and the pyruvoyl group blocking the N-terminus of the alpha chain.

The enzyme catalyses S-adenosyl-L-methionine + H(+) = S-adenosyl 3-(methylsulfanyl)propylamine + CO2. The protein operates within amine and polyamine biosynthesis; S-adenosylmethioninamine biosynthesis; S-adenosylmethioninamine from S-adenosyl-L-methionine: step 1/1. In terms of biological role, catalyzes the decarboxylation of S-adenosylmethionine to S-adenosylmethioninamine (dcAdoMet), the propylamine donor required for the synthesis of the polyamines spermine and spermidine from the diamine putrescine. The protein is S-adenosylmethionine decarboxylase proenzyme of Geobacillus kaustophilus (strain HTA426).